Consider the following 421-residue polypeptide: Actin-related protein 6 (421 aa).

Belongs to the actin family. ARP6 subfamily. Component of the SWR1 chromatin-remodeling complex composed of at least ARP6/ESD1/SUF3, PIE1, SWC6, SWC2 and H2AZs (HTA8, HTA9, HTA11). Interacts directly with SWC6/SEF and PIE1. Also interacts with H2A.F/Z proteins. Mostly expressed in flowers, and, to a lower extent, in seedlings, shoot apex, stems, siliques, seeds, and roots (at protein level).

It is found in the nucleus. The protein resides in the cytoplasm. Component of the SWR1 complex which mediates the ATP-dependent exchange of histone H2A for the H2A variant H2A.F/Z leading to transcriptional regulation of selected genes (e.g. FLC) by chromatin remodeling. Binds to the promoter region of FLC chromatin. Required for the activation of FLC and FLC/MAF genes expression to levels that inhibit flowering, through both histone H3 and H4 acetylation and methylation mechanisms. Involved in several developmental processes including organization of plant organs, leaves formation, flowering time repression, and fertility. Modulates photoperiod-dependent epidermal leaves cell development; promotes cell division in long days, and cell expansion/division in short days. May be involved in the regulation of pathogenesis-related proteins (PRs). This chain is Actin-related protein 6 (ARP6), found in Arabidopsis thaliana (Mouse-ear cress).